The sequence spans 540 residues: Chaperonin GroEL (540 aa).

ATP-binding positions include 29-32 (TLGP), 86-90 (DGTTT), Gly413, 477-479 (DAL), and Asp493.

This sequence belongs to the chaperonin (HSP60) family. In terms of assembly, forms a cylinder of 14 subunits composed of two heptameric rings stacked back-to-back. Interacts with the co-chaperonin GroES.

The protein resides in the cytoplasm. The enzyme catalyses ATP + H2O + a folded polypeptide = ADP + phosphate + an unfolded polypeptide.. In terms of biological role, together with its co-chaperonin GroES, plays an essential role in assisting protein folding. The GroEL-GroES system forms a nano-cage that allows encapsulation of the non-native substrate proteins and provides a physical environment optimized to promote and accelerate protein folding. This Clostridium botulinum (strain Eklund 17B / Type B) protein is Chaperonin GroEL.